A 702-amino-acid polypeptide reads, in one-letter code: Zinc finger CCCH domain-containing protein 62 (702 aa).

The interval 1-77 (MAAPAADDDD…SYDDPTFDPA (77 aa)) is disordered. A compositionally biased stretch (acidic residues) spans 18–54 (EEDDGEEEEGSEEEVESDDEEEEEGEGYDWSEEDDPE). An SAP domain is found at 132–166 (LEKLKVYECKAYLRMHKLRLSGNKEVLLTRIRGQI). Disordered regions lie at residues 288–349 (EKHA…NTVQ), 405–532 (SRTS…QQQP), 546–602 (GGTS…RETH), and 634–673 (QMSQ…NPQR). Over residues 298–325 (KTREVRIKDKENERMRRLNRNKENKSKG) the composition is skewed to basic and acidic residues. Composition is skewed to polar residues over residues 326 to 349 (QDNM…NTVQ) and 405 to 419 (SRTS…QAPS). Low complexity predominate over residues 430-448 (QQQQQQQPPKSIKPAPIQQ). 4 stretches are compositionally biased toward polar residues: residues 472–502 (SQEQ…QHGG), 522–532 (QQAVSYTQQQP), 546–565 (GGTS…NWGS), and 575–591 (PFTQ…NGSG). The segment at 674–702 (FRPWKPCFIYQQQGWCPYGENCKFMHDLR) adopts a C3H1-type zinc-finger fold.

This is Zinc finger CCCH domain-containing protein 62 from Oryza sativa subsp. japonica (Rice).